A 771-amino-acid polypeptide reads, in one-letter code: DnaJ homolog subfamily C member 16 (771 aa).

The first 25 residues, 1–25 (MELKRLSISWQFLIVLVLILQSLSA), serve as a signal peptide directing secretion. Over 26–532 (LDFDPYRVLG…ESLLHSNWRE (507 aa)) the chain is Cytoplasmic. Positions 29 to 93 (DPYRVLGVSR…EKRTNYDHYG (65 aa)) constitute a J domain. Residues 116–244 (FYFDESFFHF…LRQFVESLLP (129 aa)) enclose the Thioredoxin domain. Residues 533 to 553 (MMPLLSLIFSALFILFGTVIV) form a helical; Anchor for type IV membrane protein membrane-spanning segment. At 554-771 (QAFSDSNEER…FYIPSWPELD (218 aa)) the chain is on the extracellular side. Positions 559–590 (SNEERESHPPDKEEVPEKAGKTEPSFTKESSS) are disordered. Basic and acidic residues predominate over residues 560–579 (NEERESHPPDKEEVPEKAGK). Residue Asn-628 is glycosylated (N-linked (GlcNAc...) asparagine).

It is found in the endoplasmic reticulum membrane. Its function is as follows. Plays an important role in regulating the size of autophagosomes during the formation process. This Rattus norvegicus (Rat) protein is DnaJ homolog subfamily C member 16 (Dnajc16).